The following is a 172-amino-acid chain: RNA pyrophosphohydrolase (172 aa).

One can recognise a Nudix hydrolase domain in the interval 6 to 149; the sequence is GYRLNVGIVI…KRDVYRRAMK (144 aa). Residues 38–59 carry the Nudix box motif; the sequence is GGIDDGETPEQAMFRELYEEVG.

It belongs to the Nudix hydrolase family. RppH subfamily. Requires a divalent metal cation as cofactor.

Its function is as follows. Accelerates the degradation of transcripts by removing pyrophosphate from the 5'-end of triphosphorylated RNA, leading to a more labile monophosphorylated state that can stimulate subsequent ribonuclease cleavage. This Vibrio vulnificus (strain CMCP6) protein is RNA pyrophosphohydrolase.